Here is a 324-residue protein sequence, read N- to C-terminus: Methionyl-tRNA formyltransferase (324 aa).

114–117 is a binding site for (6S)-5,6,7,8-tetrahydrofolate; sequence SLLP.

This sequence belongs to the Fmt family.

The catalysed reaction is L-methionyl-tRNA(fMet) + (6R)-10-formyltetrahydrofolate = N-formyl-L-methionyl-tRNA(fMet) + (6S)-5,6,7,8-tetrahydrofolate + H(+). Attaches a formyl group to the free amino group of methionyl-tRNA(fMet). The formyl group appears to play a dual role in the initiator identity of N-formylmethionyl-tRNA by promoting its recognition by IF2 and preventing the misappropriation of this tRNA by the elongation apparatus. This is Methionyl-tRNA formyltransferase from Azobacteroides pseudotrichonymphae genomovar. CFP2.